Reading from the N-terminus, the 80-residue chain is Defensin-like protein 204 (80 aa).

Residues 1–29 (MAKTFSSICFTTLLLVVLFISTEIPKSEA) form the signal peptide. Disulfide bonds link C43/C64, C48/C73, and C52/C75.

The protein belongs to the DEFL family.

The protein resides in the secreted. The sequence is that of Defensin-like protein 204 from Arabidopsis thaliana (Mouse-ear cress).